Reading from the N-terminus, the 368-residue chain is uncharacterized protein (368 aa).

The disordered stretch occupies residues 237–287 (ESLSIPSRRRPSSIAPIGTRPSRKEIAFSNSSTPTDQTLRPPNPPAANGNA). Residues 238–253 (SLSIPSRRRPSSIAPI) show a composition bias toward low complexity. Residues 264 to 276 (FSNSSTPTDQTLR) show a composition bias toward polar residues.

This is an uncharacterized protein from Schizosaccharomyces pombe (strain 972 / ATCC 24843) (Fission yeast).